Consider the following 61-residue polypeptide: ERRAERESQMRADEEFGSQVQYLTQQRRARLPWRREGRSFDEEFRELRNVDEEERRDMMIE.

The protein belongs to the 2S seed storage albumins family. As to quaternary structure, the mature protein consists of a small and a large chain linked by 2 disulfide bonds.

Its function is as follows. This is a 2S seed storage protein. Inhibits cell-free protein synthesis. The protein is 2S seed storage albumin protein of Cucurbita moschata (Winter crookneck squash).